The sequence spans 537 residues: MFS-type transporter qa-x (537 aa).

Topologically, residues 1 to 26 (MTLLALKEDRPTPKAVYNWRVYTCAA) are cytoplasmic. A helical transmembrane segment spans residues 27-47 (IASFASCMIGYDSAFIGTTLA). Residues 48-74 (LPSFTKEFDFASYTPGALALLQSNIVS) lie on the Extracellular side of the membrane. Residues 75-95 (VYQAGAFFGCLFAYATSYFLG) traverse the membrane as a helical segment. Residues 96–98 (RRK) lie on the Cytoplasmic side of the membrane. A helical transmembrane segment spans residues 99-119 (SLIAFSVVFIIGAAIMLAADG). Residues 120 to 131 (QGRGIDPIIAGR) are Extracellular-facing. The chain crosses the membrane as a helical span at residues 132-152 (VLAGIGVGGASNMVPIYISEL). Topologically, residues 153-160 (APPAVRGR) are cytoplasmic. Residues 161–181 (LVGIYELGWQIGGLVGFWINY) traverse the membrane as a helical segment. The Extracellular portion of the chain corresponds to 182-195 (GVNTTMAPTRSQWL). N-linked (GlcNAc...) asparagine glycosylation is present at Asn184. Residues 196–216 (IPFAVQLIPAGLLFLGSFWIP) traverse the membrane as a helical segment. Residues 217-285 (ESPRWLYANG…SLKQRKVQWR (69 aa)) lie on the Cytoplasmic side of the membrane. A helical membrane pass occupies residues 286–306 (FFLGGMLFFWQNGSGINAINY). At 307-327 (YSPTVFRSIGITGTDTGFLTT) the chain is on the extracellular side. Residues 328–349 (GIFGVVKMVLTIIWLLWLVDLV) traverse the membrane as a helical segment. At 350–352 (GRR) the chain is on the cytoplasmic side. The helical transmembrane segment at 353–373 (RILFIGAAGGSLCMWFIGAYI) threads the bilayer. Residues 374 to 389 (KIADPGSNKAEDAKLT) are Extracellular-facing. A helical transmembrane segment spans residues 390–410 (SGGIAAIFFFYLWTAFYTPSW). Residues 411 to 435 (NGTPWVINSEMFDQNTRSLGQASAA) lie on the Cytoplasmic side of the membrane. Residues 436–456 (ANNWFWNFIISRFTPQMFIKM) form a helical membrane-spanning segment. The Extracellular portion of the chain corresponds to 457 to 458 (EY). Residues 459–479 (GVYFFFASLMLLSIVFIYFFL) form a helical membrane-spanning segment. Topologically, residues 480–537 (PETKSIPLEAMDRLFEIKPVQNANKNLMAELNFDRNPEREESSSLDDKDRVTQTENAV) are cytoplasmic. Residues 514-531 (RNPEREESSSLDDKDRVT) show a composition bias toward basic and acidic residues. A disordered region spans residues 514–537 (RNPEREESSSLDDKDRVTQTENAV).

Belongs to the major facilitator superfamily. Sugar transporter (TC 2.A.1.1) family.

The protein localises to the membrane. In terms of biological role, MFS-type transporter; part of the qa gene cluster that mediates the catabolism of quinic acid (QA) and as such, allows the use of QA as a sole carbon source. Involved in the upatke of QA. The qa cluster encodes 3 inducible enymes (qa-2, qa-3 and qa-4) catalyzing the first three reactions in the catabolism of quinic acid to protocatechuic acid (also known as 3,4-Dihydroxybenzoic acid). This is MFS-type transporter qa-x from Neurospora crassa (strain ATCC 24698 / 74-OR23-1A / CBS 708.71 / DSM 1257 / FGSC 987).